Consider the following 206-residue polypeptide: LexA repressor (206 aa).

A DNA-binding region (H-T-H motif) is located at residues 28–48; it reads RAEIATRLGFKSANAAEEHLK. Active-site for autocatalytic cleavage activity residues include Ser-123 and Lys-160.

Belongs to the peptidase S24 family. Homodimer.

The catalysed reaction is Hydrolysis of Ala-|-Gly bond in repressor LexA.. Functionally, represses a number of genes involved in the response to DNA damage (SOS response), including recA and lexA. In the presence of single-stranded DNA, RecA interacts with LexA causing an autocatalytic cleavage which disrupts the DNA-binding part of LexA, leading to derepression of the SOS regulon and eventually DNA repair. The chain is LexA repressor from Shewanella sp. (strain MR-7).